The chain runs to 435 residues: Secreted RxLR effector protein 35 (435 aa).

An N-terminal signal peptide occupies residues 1 to 22 (MRGAYYIIIALCVVASSQVAAG). The RxLR-dEER signature appears at 48–65 (RFLRGSRVVHDDLANEER). Positions 336 to 357 (RPKRTTDGNTGTISLPTKPTKT) are disordered. The span at 342–354 (DGNTGTISLPTKP) shows a compositional bias: polar residues.

This sequence belongs to the RxLR effector family.

The protein resides in the secreted. It localises to the host nucleus. Its function is as follows. Secreted effector that acts as an elicitor that induces cell death in host plant cells. The protein is Secreted RxLR effector protein 35 of Plasmopara viticola (Downy mildew of grapevine).